An 84-amino-acid chain; its full sequence is NAD(P)H-quinone oxidoreductase subunit O (84 aa).

This sequence belongs to the complex I NdhO subunit family. As to quaternary structure, NDH-1 can be composed of about 15 different subunits; different subcomplexes with different compositions have been identified which probably have different functions.

Its subcellular location is the cellular thylakoid membrane. The catalysed reaction is a plastoquinone + NADH + (n+1) H(+)(in) = a plastoquinol + NAD(+) + n H(+)(out). It carries out the reaction a plastoquinone + NADPH + (n+1) H(+)(in) = a plastoquinol + NADP(+) + n H(+)(out). In terms of biological role, NDH-1 shuttles electrons from an unknown electron donor, via FMN and iron-sulfur (Fe-S) centers, to quinones in the respiratory and/or the photosynthetic chain. The immediate electron acceptor for the enzyme in this species is believed to be plastoquinone. Couples the redox reaction to proton translocation, and thus conserves the redox energy in a proton gradient. Cyanobacterial NDH-1 also plays a role in inorganic carbon-concentration. The chain is NAD(P)H-quinone oxidoreductase subunit O from Parasynechococcus marenigrum (strain WH8102).